The chain runs to 181 residues: Negative modulator of initiation of replication (181 aa).

Interaction with DNA stretches follow at residues 87–88 (AV), 116–120 (RTRVY), and 150–156 (NTNTGRK).

The protein belongs to the SeqA family. As to quaternary structure, homodimer. Polymerizes to form helical filaments.

It localises to the cytoplasm. Its function is as follows. Negative regulator of replication initiation, which contributes to regulation of DNA replication and ensures that replication initiation occurs exactly once per chromosome per cell cycle. Binds to pairs of hemimethylated GATC sequences in the oriC region, thus preventing assembly of replication proteins and re-initiation at newly replicated origins. Repression is relieved when the region becomes fully methylated. The protein is Negative modulator of initiation of replication of Shigella dysenteriae serotype 1 (strain Sd197).